A 502-amino-acid polypeptide reads, in one-letter code: Cytochrome P450 83A1 (502 aa).

A helical membrane pass occupies residues Met-1–Gln-21. A heme-binding site is contributed by Cys-442.

This sequence belongs to the cytochrome P450 family. Heme is required as a cofactor.

It is found in the endoplasmic reticulum membrane. It catalyses the reaction an (E)-omega-(methylsulfanyl)-alkanal oxime + glutathione + reduced [NADPH--hemoprotein reductase] + O2 = an S-[(1E)-1-(hydroxyimino)-omega-(methylsulfanyl)alkyl]-L-glutathione + oxidized [NADPH--hemoprotein reductase] + 2 H2O + H(+). In terms of biological role, involved in the metabolism of aliphatic and aromatic oximes. Involved in the biosynthesis of both short-chain and long-chain aliphatic glucosinolates. This Arabidopsis thaliana (Mouse-ear cress) protein is Cytochrome P450 83A1 (CYP83A1).